Here is a 79-residue protein sequence, read N- to C-terminus: Conotoxin VnMSGL-0122 (79 aa).

Residues 1–20 form the signal peptide; sequence MSGLGIMVLALLLLVFMATS. Positions 21–44 are excised as a propeptide; the sequence is HQDGGGKQATQRDAINVRRRRSIT. 3 disulfide bridges follow: cysteine 52/cysteine 64, cysteine 56/cysteine 73, and cysteine 63/cysteine 77. The residue at position 78 (leucine 78) is a Leucine amide.

This sequence belongs to the conotoxin O3 superfamily. In terms of tissue distribution, expressed by the venom duct.

The protein resides in the secreted. This chain is Conotoxin VnMSGL-0122, found in Conus ventricosus (Mediterranean cone).